The primary structure comprises 100 residues: MDVLTVVVSTADLHLANLQEVKRRRRRSHVRNRRARGYKSPSERARSIARLFQMLPFHGVDPVDWFPDVVRSPSVTSLVSYESFDDTDWFAGNEWAEGSF.

A Nuclear localization signal motif is present at residues 22-27 (KRRRRR).

Belongs to the cucumovirus/ilarvirus protein 2b family. As to quaternary structure, homotetramer. Interacts with host AGO1; this interaction blocks AGO1 cleavage activity to attenuate RNA silencing and thus counter host defense. Interacts with host JAZ.

The protein localises to the host nucleus. In terms of biological role, multifunctional protein that plays two independent roles: viral suppressor of host RNAi (VSR) and viral inducer of host attractiveness to insect vectors (VIA). Acts as a suppressor of RNA-mediated gene silencing, also known as post-transcriptional gene silencing (PTGS), a mechanism of plant viral defense that limits the accumulation of viral RNAs. May directly interfere with mobile silencing signaling. Also inhibits signal transduction by the phytohormone jasmonate, making the infected plant more attractive to aphids, which are the second host to play a role as a dissemination vector. Acts by binding to and inhibiting JAZ degradation in the host. The sequence is that of Suppressor of silencing 2b from Cucumis sativus (Cucumber).